The sequence spans 416 residues: tRNA(Met) cytidine acetate ligase (416 aa).

Residues 7-20, glycine 102, asparagine 166, and arginine 191 contribute to the ATP site; that span reads VAEY…HLYL.

The protein belongs to the TmcAL family.

The protein resides in the cytoplasm. The catalysed reaction is cytidine(34) in elongator tRNA(Met) + acetate + ATP = N(4)-acetylcytidine(34) in elongator tRNA(Met) + AMP + diphosphate. Its function is as follows. Catalyzes the formation of N(4)-acetylcytidine (ac(4)C) at the wobble position of elongator tRNA(Met), using acetate and ATP as substrates. First activates an acetate ion to form acetyladenylate (Ac-AMP) and then transfers the acetyl group to tRNA to form ac(4)C34. This is tRNA(Met) cytidine acetate ligase from Syntrophomonas wolfei subsp. wolfei (strain DSM 2245B / Goettingen).